The sequence spans 640 residues: Phosphatidylinositol-binding clathrin assembly protein (640 aa).

Residue serine 2 is modified to N-acetylserine. The 132-residue stretch at 14-145 (QHSVTGSAVS…VSYRQVAFDF (132 aa)) folds into the ENTH domain. Phosphoserine occurs at positions 16 and 20. Residues 221 to 294 (KYFDMKKNQC…LEGKKIKDST (74 aa)) are interaction with PIMREG. Residue lysine 238 forms a Glycyl lysine isopeptide (Lys-Gly) (interchain with G-Cter in SUMO2) linkage. Serine 303 and serine 315 each carry phosphoserine. The segment at 543–568 (NGTTKNDVSCSQPGEKKLTGGSNWQP) is disordered. The span at 544 to 554 (GTTKNDVSCSQ) shows a compositional bias: polar residues.

This sequence belongs to the PICALM/SNAP91 family. As to quaternary structure, binds to clathrin; involves primarily the C-terminal sequences, but the full-length protein is required for full binding capacity. Binds phosphatidylinositol 4,5- bisphosphate. Interacts with PIMREG; this interaction may change the subcellular location into the nucleus. Interacts with AP2A1 (via its alpha-appendage domain). Interacts (via N-terminus) with VAMP2; VAMP3; VAMP7 and VAMP8 (Via N-terminus). Interacts with LC3/MAP1LC3A. In terms of tissue distribution, isoform 2 was found in most tissues examined. Isoform 1 has an overlapping expression pattern but is absent from lung, heart and pancreas. Both isoforms are widely expressed in the brain, higher levels are seen in hippocampus, dentate gyrus, medial habenula nucleus and cerebellar granule cells.

The protein resides in the cell membrane. Its subcellular location is the membrane. The protein localises to the clathrin-coated pit. It localises to the golgi apparatus. It is found in the cytoplasmic vesicle. The protein resides in the clathrin-coated vesicle. Its subcellular location is the nucleus. Its function is as follows. Cytoplasmic adapter protein that plays a critical role in clathrin-mediated endocytosis which is important in processes such as internalization of cell receptors, synaptic transmission or removal of apoptotic cells. Recruits AP-2 and attaches clathrin triskelions to the cytoplasmic side of plasma membrane leading to clathrin-coated vesicles (CCVs) assembly. Furthermore, regulates clathrin-coated vesicle size and maturation by directly sensing and driving membrane curvature. In addition to binding to clathrin, mediates the endocytosis of small R-SNARES (Soluble NSF Attachment Protein REceptors) between plasma membranes and endosomes including VAMP2, VAMP3, VAMP4, VAMP7 or VAMP8. In turn, PICALM-dependent SNARE endocytosis is required for the formation and maturation of autophagic precursors. Modulates thereby autophagy and the turnover of autophagy substrates such as MAPT/TAU or amyloid precursor protein cleaved C-terminal fragment (APP-CTF). The polypeptide is Phosphatidylinositol-binding clathrin assembly protein (Picalm) (Rattus norvegicus (Rat)).